Reading from the N-terminus, the 199-residue chain is Ribonuclease HII (199 aa).

The 190-residue stretch at 9–198 folds into the RNase H type-2 domain; it reads QFVAGVDEVG…VRAAIEQMNL (190 aa). Residues Asp-15, Glu-16, and Asp-107 each contribute to the a divalent metal cation site.

Belongs to the RNase HII family. It depends on Mn(2+) as a cofactor. Mg(2+) is required as a cofactor.

It is found in the cytoplasm. The enzyme catalyses Endonucleolytic cleavage to 5'-phosphomonoester.. Functionally, endonuclease that specifically degrades the RNA of RNA-DNA hybrids. The chain is Ribonuclease HII from Saccharophagus degradans (strain 2-40 / ATCC 43961 / DSM 17024).